The following is a 551-amino-acid chain: Glucans biosynthesis protein D (551 aa).

A signal peptide (tat-type signal) is located at residues 1 to 32; the sequence is MNRRRFIKGSMAMAAVCGSSGIASLFSQAAFA.

Belongs to the OpgD/OpgG family. Predicted to be exported by the Tat system. The position of the signal peptide cleavage has not been experimentally proven.

Its subcellular location is the periplasm. It functions in the pathway glycan metabolism; osmoregulated periplasmic glucan (OPG) biosynthesis. Functionally, probably involved in the control of the structural glucose backbone of osmoregulated periplasmic glucans (OPGs). The sequence is that of Glucans biosynthesis protein D (mdoD) from Salmonella typhimurium (strain LT2 / SGSC1412 / ATCC 700720).